A 423-amino-acid polypeptide reads, in one-letter code: UDP-N-acetylglucosamine 1-carboxyvinyltransferase 1 (423 aa).

23–24 (KN) contacts phosphoenolpyruvate. A UDP-N-acetyl-alpha-D-glucosamine-binding site is contributed by Arg96. Catalysis depends on Cys120, which acts as the Proton donor. Cys120 carries the post-translational modification 2-(S-cysteinyl)pyruvic acid O-phosphothioketal. UDP-N-acetyl-alpha-D-glucosamine-binding positions include 125–129 (RPIDL), Asp309, and Val331.

It belongs to the EPSP synthase family. MurA subfamily.

It is found in the cytoplasm. It carries out the reaction phosphoenolpyruvate + UDP-N-acetyl-alpha-D-glucosamine = UDP-N-acetyl-3-O-(1-carboxyvinyl)-alpha-D-glucosamine + phosphate. It functions in the pathway cell wall biogenesis; peptidoglycan biosynthesis. In terms of biological role, cell wall formation. Adds enolpyruvyl to UDP-N-acetylglucosamine. The protein is UDP-N-acetylglucosamine 1-carboxyvinyltransferase 1 of Streptococcus thermophilus (strain ATCC BAA-250 / LMG 18311).